A 245-amino-acid chain; its full sequence is MGAPYDFAPERPDHIQQILDGLDRYNPETTGVFQDYVMQQCESQTYDCYANLALLKLYQFNPHLSRDETVTNILVKALTMFPSPDFALGLSLLPSHLLAPLNSSAHNPAAGDAPLSEAVQKLNELRNLLEGADYATFWSTLDSDDLYADLIADVSGFEELMRVRIAATVSQAVREVDRSILESWLNLEGSDFEHFVGSVCGWTIEGAKIKVPMNKDNEAKGTVVRENVKFDQFARVIKRAYEQPA.

The PCI domain occupies tyrosine 46 to asparagine 227.

This sequence belongs to the eIF-3 subunit K family. As to quaternary structure, component of the eukaryotic translation initiation factor 3 (eIF-3) complex.

Its subcellular location is the cytoplasm. Component of the eukaryotic translation initiation factor 3 (eIF-3) complex, which is involved in protein synthesis of a specialized repertoire of mRNAs and, together with other initiation factors, stimulates binding of mRNA and methionyl-tRNAi to the 40S ribosome. The eIF-3 complex specifically targets and initiates translation of a subset of mRNAs involved in cell proliferation. This Phaeosphaeria nodorum (strain SN15 / ATCC MYA-4574 / FGSC 10173) (Glume blotch fungus) protein is Eukaryotic translation initiation factor 3 subunit K.